Reading from the N-terminus, the 614-residue chain is Zinc metalloproteinase-disintegrin-like HR1b (614 aa).

A signal peptide spans 1-20; that stretch reads MIQVLLVTICLAVFPYQGSS. Positions 21 to 191 are excised as a propeptide; the sequence is IILESGNVND…KASKLVVTAE (171 aa). Gln-192 is modified (pyrrolidone carboxylic acid). The Peptidase M12B domain occupies 198–394; it reads RYIKLAIVVD…HKPQCILNAP (197 aa). The N-linked (GlcNAc...) asparagine glycan is linked to Asn-264. Cystine bridges form between Cys-309–Cys-389, Cys-349–Cys-373, and Cys-351–Cys-356. Position 334 (His-334) interacts with Zn(2+). The active site involves Glu-335. The Zn(2+) site is built by His-338 and His-344. Asn-372 carries an N-linked (GlcNAc...) asparagine glycan. Residues 395 to 398 constitute a propeptide that is removed on maturation; the sequence is SKTD. The region spanning 402–488 is the Disintegrin domain; the sequence is PPVCGNELLE…DCPTDRFHRN (87 aa). Ca(2+) contacts are provided by Val-404, Asn-407, Leu-409, Glu-411, Glu-414, and Asp-417. 22 disulfides stabilise this stretch: Cys-405–Cys-424, Cys-405–Cys-434, Cys-416–Cys-429, Cys-416–Cys-434, Cys-418–Cys-424, Cys-428–Cys-451, Cys-442–Cys-448, Cys-447–Cys-473, Cys-460–Cys-480, Cys-467–Cys-492, Cys-467–Cys-499, Cys-492–Cys-504, Cys-499–Cys-504, Cys-511–Cys-526, Cys-511–Cys-561, Cys-526–Cys-568, Cys-539–Cys-549, Cys-549–Cys-556, Cys-556–Cys-593, Cys-561–Cys-568, Cys-587–Cys-598, and Cys-593–Cys-598. The D/ECD-tripeptide signature appears at 466 to 468; that stretch reads ECD. N-linked (GlcNAc...) asparagine glycosylation is present at Asn-518. Residue Asn-571 is glycosylated (N-linked (GlcNAc...) asparagine). Residues 608-614 constitute a propeptide that is removed on maturation; sequence TTVFSLI.

It belongs to the venom metalloproteinase (M12B) family. P-III subfamily. P-IIIb sub-subfamily. As to quaternary structure, monomer. It depends on Zn(2+) as a cofactor. In terms of tissue distribution, expressed by the venom gland.

It is found in the secreted. Its function is as follows. Zinc protease that induces hemorrhage. Has preference for Tyr, Leu, Arg, Met, and Phe at the P1 position, in descending order (in vitro). Shows equal preference for the sequences of Ala-Asp and Arg-Ile at the P3-P2 position with different enzyme cleavage sites across the P1 position: the N-terminus side for Ala-Asp and the C-terminus side for Arg-Ile. Inhibits platelet aggregation induced by ADP, thrombin, platelet-activating factor and collagen. Acts by inhibiting fibrinogen interaction with platelet receptors alpha-IIb/beta-3 (ITGA2B/ITGB3). This chain is Zinc metalloproteinase-disintegrin-like HR1b, found in Protobothrops flavoviridis (Habu).